Consider the following 153-residue polypeptide: Putative ubiquitin-conjugating enzyme E2 N-like (153 aa).

The region spanning E3 to M150 is the UBC core domain. K83 is modified (N6-acetyllysine).

It belongs to the ubiquitin-conjugating enzyme family. Expressed in epididymis (at protein level).

The chain is Putative ubiquitin-conjugating enzyme E2 N-like (UBE2NL) from Homo sapiens (Human).